The following is a 901-amino-acid chain: Protein translocase subunit SecA (901 aa).

Residues Gln89, 107–111, and Asp502 contribute to the ATP site; that span reads GEGKT. The segment at 838–883 is disordered; sequence YQQQQAETEAQMHPEHEEAEGGEVSGRVAGFDETDPTTWGNPSRND. 4 residues coordinate Zn(2+): Cys885, Cys887, Cys896, and His897.

It belongs to the SecA family. As to quaternary structure, monomer and homodimer. Part of the essential Sec protein translocation apparatus which comprises SecA, SecYEG and auxiliary proteins SecDF-YajC and YidC. It depends on Zn(2+) as a cofactor.

It is found in the cell inner membrane. The protein resides in the cytoplasm. The catalysed reaction is ATP + H2O + cellular proteinSide 1 = ADP + phosphate + cellular proteinSide 2.. Its function is as follows. Part of the Sec protein translocase complex. Interacts with the SecYEG preprotein conducting channel. Has a central role in coupling the hydrolysis of ATP to the transfer of proteins into and across the cell membrane, serving both as a receptor for the preprotein-SecB complex and as an ATP-driven molecular motor driving the stepwise translocation of polypeptide chains across the membrane. In Paracoccus denitrificans (strain Pd 1222), this protein is Protein translocase subunit SecA.